Reading from the N-terminus, the 319-residue chain is MFATLAAPQPPLPLDLVAAIQDLKRELNAVILAHYYQDPAIQDVADYIGDSLGLSRQAASTNADVIVFAGVHFMAETAKILNPDKLVLLPDLAAGCSLADSCPADAFAAFKAQYPDHWVISYINCSAEIKALSDIICTSSNAVKIVQQLPPDQPLIFAPDRNLGRYVMAQTGRQMVLWEGSCIVHETFSERRILELKATYPNAQVIAHPECEEAVLRHANFIGSTTALLNYSQTEDCDTFIVVTEPGILHQMQRRNPQKTFIPAPPQDQTCNCNECPFMRLNTLEKLYLCMRDRKPQIELPEDLRLAALKPIQRMLEMS.

His34 and Ser51 together coordinate iminosuccinate. [4Fe-4S] cluster is bound at residue Cys96. Iminosuccinate contacts are provided by residues 122–124 (YIN) and Ser139. Cys182 is a binding site for [4Fe-4S] cluster. Iminosuccinate-binding positions include 208-210 (HPE) and Thr225. Position 276 (Cys276) interacts with [4Fe-4S] cluster.

The protein belongs to the quinolinate synthase family. Type 2 subfamily. [4Fe-4S] cluster serves as cofactor.

It is found in the cytoplasm. It carries out the reaction iminosuccinate + dihydroxyacetone phosphate = quinolinate + phosphate + 2 H2O + H(+). It participates in cofactor biosynthesis; NAD(+) biosynthesis; quinolinate from iminoaspartate: step 1/1. Functionally, catalyzes the condensation of iminoaspartate with dihydroxyacetone phosphate to form quinolinate. The polypeptide is Quinolinate synthase (Thermosynechococcus vestitus (strain NIES-2133 / IAM M-273 / BP-1)).